We begin with the raw amino-acid sequence, 451 residues long: Cysteine desulfurase (451 aa).

Pyridoxal 5'-phosphate-binding residues include alanine 121, threonine 122, glutamine 229, serine 249, and histidine 251. Lysine 252 carries the N6-(pyridoxal phosphate)lysine modification. Threonine 289 provides a ligand contact to pyridoxal 5'-phosphate. Cysteine 375 acts as the Cysteine persulfide intermediate in catalysis. Cysteine 375 contributes to the [2Fe-2S] cluster binding site. Cysteine 375 is a binding site for Zn(2+). Residue cysteine 375 is modified to Cysteine persulfide.

It belongs to the class-V pyridoxal-phosphate-dependent aminotransferase family. NifS/IscS subfamily. As to quaternary structure, homodimer. Component of the mitochondrial core iron-sulfur cluster (ISC) complex composed of NFS1, LYRM4, NDUFAB1, ISCU, FXN, and FDX2; this complex is a heterohexamer containing two copies of each monomer. Component of cyteine desulfurase complex composed of NFS1, LYRM4 and NDUFAB1; this complex contributes to the activation of cysteine desulfurase activity and NFS1 stabilization. Interacts (homodimer form) with ISCU (D-state); each monomer interacts with the C-terminal regions of each NFS1 monomer. Interacts with HSPA9. Interacts (via homodimer form) with FDX2. Interacts (via homodimer form) with FXN. Interacts with LYRM4. Component of a complex composed of FXN, NFS1, LYRM4 and ISCU. Monomer. Homodimer. Oligomer. Interacts with ISCU. Component of the cysteine desulfurase complex composed of NFS1 and LYRM4; this complex contributes to the activation of cysteine desulfurase activity. Interacts with MOCS3. Pyridoxal 5'-phosphate serves as cofactor. In terms of processing, N-gluconoylated. Cysteine persulfide intermediate is reduced by thiol-containing molecules like glutathione and L-cysteine. Persulfide reduction is a rate-limiting step of cysteine desulfurase catalytic cycle.

Its subcellular location is the mitochondrion. It is found in the cytoplasm. The protein resides in the nucleus. It localises to the cytoskeleton. The protein localises to the microtubule organizing center. Its subcellular location is the centrosome. It catalyses the reaction (sulfur carrier)-H + L-cysteine = (sulfur carrier)-SH + L-alanine. The catalysed reaction is L-cysteinyl-[cysteine desulfurase] + L-cysteine = S-sulfanyl-L-cysteinyl-[cysteine desulfurase] + L-alanine. With respect to regulation, active only in complex with LYRM4. In terms of biological role, cysteine desulfurase, of the core iron-sulfur cluster (ISC) assembly complex, that catalyzes the desulfuration of L-cysteine to L-alanine, as component of the cysteine desulfurase complex leading to the formation of a cysteine persulfide intermediate at the active site cysteine residue and participates in the [2Fe-2S] clusters assembly on the scaffolding protein ISCU. The persulfide is then transferred on the flexible Cys loop from the catalytic site of NFS1 to the surface of NFS1. After the NFS1-linked persulfide sulfur is transferred to one of the conserved Cys residues of the scaffold, a reaction assisted by FXN. The core iron-sulfur cluster (ISC) assembly complex is involved in the de novo synthesis of a [2Fe-2S] cluster, the first step of the mitochondrial iron-sulfur protein biogenesis. This process is initiated by the cysteine desulfurase complex (NFS1:LYRM4:NDUFAB1) that produces persulfide which is delivered on the scaffold protein ISCU in a FXN-dependent manner. Then this complex is stabilized by FDX2 which provides reducing equivalents to accomplish the [2Fe-2S] cluster assembly. Finally, the [2Fe-2S] cluster is transferred from ISCU to chaperone proteins, including HSCB, HSPA9 and GLRX5. Its function is as follows. May catalyze the desulfuration of L-cysteine to L-alanine as component of the cysteine desulfurase complex (NFS1:LYRM4), leading to the formation of a cysteine persulfide intermediate. Acts as a sulfur donor for MOCS3 by transferring the sulfur of the cysteine persulfide intermediate on MOCS3. The protein is Cysteine desulfurase of Rattus norvegicus (Rat).